The primary structure comprises 356 residues: DNA polymerase IV (356 aa).

One can recognise a UmuC domain in the interval 7 to 188; sequence IIHIDMDCFY…LPLKKISGVG (182 aa). Mg(2+) is bound by residues D11 and D106. The active site involves E107.

It belongs to the DNA polymerase type-Y family. As to quaternary structure, monomer. Mg(2+) serves as cofactor.

Its subcellular location is the cytoplasm. The catalysed reaction is DNA(n) + a 2'-deoxyribonucleoside 5'-triphosphate = DNA(n+1) + diphosphate. In terms of biological role, poorly processive, error-prone DNA polymerase involved in untargeted mutagenesis. Copies undamaged DNA at stalled replication forks, which arise in vivo from mismatched or misaligned primer ends. These misaligned primers can be extended by PolIV. Exhibits no 3'-5' exonuclease (proofreading) activity. May be involved in translesional synthesis, in conjunction with the beta clamp from PolIII. The polypeptide is DNA polymerase IV (Glaesserella parasuis serovar 5 (strain SH0165) (Haemophilus parasuis)).